The sequence spans 63 residues: UPF0434 protein Sde_1297 (63 aa).

This sequence belongs to the UPF0434 family.

The protein is UPF0434 protein Sde_1297 of Saccharophagus degradans (strain 2-40 / ATCC 43961 / DSM 17024).